Here is an 85-residue protein sequence, read N- to C-terminus: Small ribosomal subunit protein uS17 (85 aa).

The protein belongs to the universal ribosomal protein uS17 family. Part of the 30S ribosomal subunit.

In terms of biological role, one of the primary rRNA binding proteins, it binds specifically to the 5'-end of 16S ribosomal RNA. This Mycoplasma pneumoniae (strain ATCC 29342 / M129 / Subtype 1) (Mycoplasmoides pneumoniae) protein is Small ribosomal subunit protein uS17.